Reading from the N-terminus, the 389-residue chain is Tubby-like F-box protein 11 (389 aa).

The F-box domain maps to 36–82 (DYRWSEIPEELLREILIRVEAADGGGWPSRRSVVACAGVCRGWRLLM). Residues 250–289 (STMEPQGVASEPSEFPLLGTRSTLSRSQSKPLRSSSSHLK) are disordered. The segment covering 273–286 (LSRSQSKPLRSSSS) has biased composition (low complexity).

It belongs to the TUB family. Ubiquitous.

The protein is Tubby-like F-box protein 11 of Arabidopsis thaliana (Mouse-ear cress).